The following is a 918-amino-acid chain: uncharacterized protein (918 aa).

7 disordered regions span residues 66–150 (AMVH…SSYG), 226–283 (GADG…NADF), 326–481 (ADGT…EFGN), 515–548 (ALEKNHEKNSDGTFKDESKGSNSRVNRTDGGSNL), 594–707 (EITH…NAVK), 737–774 (NHSNDSDASSDSKIHSKSVDGTELTDAKHSNVSTSHLT), and 800–918 (HITH…IIQM). The span at 79-89 (QSSGSSSNTHS) shows a compositional bias: low complexity. Positions 103 to 127 (NSEKKDGYNKESKVDEANENTKIKS) are enriched in basic and acidic residues. A compositionally biased stretch (low complexity) spans 270–281 (SKKAASASGSNA). Polar residues-rich tracts occupy residues 326 to 354 (ADGTSSMEASHAGSNSSKINSASGQSSDL), 363 to 372 (KSHSTSNKTD), and 379 to 404 (ANQSAGSISEQIGKNGQRSLNESSIE). The span at 430-441 (SSSHSKSASGTS) shows a compositional bias: low complexity. Positions 515-533 (ALEKNHEKNSDGTFKDESK) are enriched in basic and acidic residues. Composition is skewed to polar residues over residues 534 to 545 (GSNSRVNRTDGG) and 604 to 619 (VAASANAKSSLDTSMS). Residues 632–647 (SSQAADSHDAISASSD) show a composition bias toward low complexity. Over residues 648 to 660 (VDAKIVKHADRSE) the composition is skewed to basic and acidic residues. Positions 661–672 (SISNDSSNQTAS) are enriched in polar residues. Over residues 673 to 688 (EHNDSSKQSEHEKRQN) the composition is skewed to basic and acidic residues. The span at 689 to 702 (ADGSFSDVSSNSAK) shows a compositional bias: polar residues. Basic and acidic residues-rich tracts occupy residues 738–765 (HSNDSDASSDSKIHSKSVDGTELTDAKH), 800–814 (HITHEKSRADVDAGH), 830–846 (EGFKHHSDLESRGEGAQ), and 883–918 (LAKDGKGHFTETKDGSESHHKIDDKDVKQHKDIIQM).

This is an uncharacterized protein from Caenorhabditis elegans.